We begin with the raw amino-acid sequence, 375 residues long: Succinyl-diaminopimelate desuccinylase (375 aa).

His-66 contributes to the Zn(2+) binding site. The active site involves Asp-68. Asp-99 contributes to the Zn(2+) binding site. Glu-133 acts as the Proton acceptor in catalysis. Zn(2+)-binding residues include Glu-134, Glu-162, and His-348.

This sequence belongs to the peptidase M20A family. DapE subfamily. As to quaternary structure, homodimer. It depends on Zn(2+) as a cofactor. The cofactor is Co(2+).

The enzyme catalyses N-succinyl-(2S,6S)-2,6-diaminopimelate + H2O = (2S,6S)-2,6-diaminopimelate + succinate. Its pathway is amino-acid biosynthesis; L-lysine biosynthesis via DAP pathway; LL-2,6-diaminopimelate from (S)-tetrahydrodipicolinate (succinylase route): step 3/3. Its function is as follows. Catalyzes the hydrolysis of N-succinyl-L,L-diaminopimelic acid (SDAP), forming succinate and LL-2,6-diaminopimelate (DAP), an intermediate involved in the bacterial biosynthesis of lysine and meso-diaminopimelic acid, an essential component of bacterial cell walls. The chain is Succinyl-diaminopimelate desuccinylase from Buchnera aphidicola subsp. Acyrthosiphon pisum (strain APS) (Acyrthosiphon pisum symbiotic bacterium).